The chain runs to 710 residues: MSKQTFTTTFAGNPLVVEVGQVAKQANGATVVRYGESTVLTAAVMSKKMATGDFFPLQVNYEEKMYAAGKFPGGFMKREGRPSTDATLTARLIDRPIRPMFAEGFRNEVQVTNTVLSYDENASAPMAAMFGSSLALSISDIPFNGPIAGVQVGYIDGEFIINPDKEQMEASLLELTVAGSKEAINMVESGAKELSEDIMLEALLKGHQAIQELIAFQEQIVAVVGKEKAEVELLQVDADLQADIVAKYNAQLQKAVQVEEKKAREAATEAVKEMVKAEYEERYAEDENLATIMRDVAEILEQMEHAEVRRLITEDKIRPDGRKIDEIRPLDAVVDFLPKVHGSGLFTRGQTQALSILTLAPMGETQIIDGLAPEYKKRFLHHYNFPQYSVGETGRYGAAGRREIGHGALGERALEQVLPSLEEFPYAIRLVAEVLESNGSSSQASICAGTLALMAGGVPIKAPVAGIAMGLISDGTNYTVLTDIQGLEDHFGDMDFKVAGTREGITALQMDIKIAGITPQILEEALAQAKKARFEILDVIEATIAEPRPELAPTAPKIDTIKIDVDKIKVVIGKGGETIDKIIAETGVKIDIDDEGNVSIYSSDQAAINRTKEIIAGLVREAKVGEVYHAKVVRIEKFGAFVNLFDKTDALVHISEIAWTRTTNVSDVLEVGEDVDVKVIKIDEKGRVDASMKALIPRPPKPEKKEEKHD.

Residues aspartate 489 and aspartate 495 each coordinate Mg(2+). In terms of domain architecture, KH spans 556–615; sequence PKIDTIKIDVDKIKVVIGKGGETIDKIIAETGVKIDIDDEGNVSIYSSDQAAINRTKEII. One can recognise an S1 motif domain in the interval 625 to 693; sequence GEVYHAKVVR…EKGRVDASMK (69 aa). A disordered region spans residues 691 to 710; that stretch reads SMKALIPRPPKPEKKEEKHD. A compositionally biased stretch (basic and acidic residues) spans 700–710; the sequence is PKPEKKEEKHD.

It depends on Mg(2+) as a cofactor.

Its subcellular location is the cytoplasm. The catalysed reaction is RNA(n+1) + phosphate = RNA(n) + a ribonucleoside 5'-diphosphate. In terms of biological role, involved in mRNA degradation. Catalyzes the phosphorolysis of single-stranded polyribonucleotides processively in the 3'- to 5'-direction. The chain is Polyribonucleotide nucleotidyltransferase from Streptococcus pyogenes serotype M6 (strain ATCC BAA-946 / MGAS10394).